A 448-amino-acid polypeptide reads, in one-letter code: Glucose-6-phosphate isomerase (448 aa).

The Proton donor role is filled by Glu290. Catalysis depends on residues His311 and Lys425.

The protein belongs to the GPI family.

It localises to the cytoplasm. The catalysed reaction is alpha-D-glucose 6-phosphate = beta-D-fructose 6-phosphate. It functions in the pathway carbohydrate biosynthesis; gluconeogenesis. Its pathway is carbohydrate degradation; glycolysis; D-glyceraldehyde 3-phosphate and glycerone phosphate from D-glucose: step 2/4. Catalyzes the reversible isomerization of glucose-6-phosphate to fructose-6-phosphate. This Lactococcus lactis subsp. cremoris (strain SK11) protein is Glucose-6-phosphate isomerase.